A 147-amino-acid chain; its full sequence is Small ribosomal subunit protein uS9 (147 aa).

Belongs to the universal ribosomal protein uS9 family.

This chain is Small ribosomal subunit protein uS9 (rps16), found in Dictyostelium discoideum (Social amoeba).